Reading from the N-terminus, the 131-residue chain is Small ribosomal subunit protein uS8 (131 aa).

Belongs to the universal ribosomal protein uS8 family. In terms of assembly, part of the 30S ribosomal subunit. Contacts proteins S5 and S12.

One of the primary rRNA binding proteins, it binds directly to 16S rRNA central domain where it helps coordinate assembly of the platform of the 30S subunit. This is Small ribosomal subunit protein uS8 from Dehalococcoides mccartyi (strain CBDB1).